A 101-amino-acid polypeptide reads, in one-letter code: Salivary thrombin inhibitor anophelin (101 aa).

The first 21 residues, 1-21, serve as a signal peptide directing secretion; the sequence is MASKVIVIALLCIALAAFVQG. The interval 26–101 is disordered; that stretch reads THGEEPEYDE…SDSSSGSTEN (76 aa). Acidic residues predominate over residues 31–40; that stretch reads PEYDEDDGAD. A blocks active site cleft of host thrombin in a reverse direction compared to substrates region spans residues 75–78; that stretch reads DPGR. The span at 75–87 shows a compositional bias: basic and acidic residues; sequence DPGRRPEFLKQHN. A compositionally biased stretch (polar residues) spans 88–101; the sequence is NENQSDSSSGSTEN. Residue Asn-90 is glycosylated (N-linked (GlcNAc...) asparagine).

Belongs to the anophelin family. As to quaternary structure, interacts with human F2 (thrombin); the interaction results in thrombin inhibition.

It is found in the secreted. Functionally, salivary protein with anticoagulant activity that inhibits host thrombin (F2). The chain is Salivary thrombin inhibitor anophelin from Anopheles stephensi (Indo-Pakistan malaria mosquito).